The primary structure comprises 203 residues: Putative 3-methyladenine DNA glycosylase (203 aa).

It belongs to the DNA glycosylase MPG family.

The polypeptide is Putative 3-methyladenine DNA glycosylase (Clostridium botulinum (strain Loch Maree / Type A3)).